Here is a 179-residue protein sequence, read N- to C-terminus: Dual-action ribosomal maturation protein DarP (179 aa).

This sequence belongs to the DarP family.

The protein resides in the cytoplasm. Member of a network of 50S ribosomal subunit biogenesis factors which assembles along the 30S-50S interface, preventing incorrect 23S rRNA structures from forming. Promotes peptidyl transferase center (PTC) maturation. The sequence is that of Dual-action ribosomal maturation protein DarP from Erwinia tasmaniensis (strain DSM 17950 / CFBP 7177 / CIP 109463 / NCPPB 4357 / Et1/99).